The sequence spans 394 residues: Elongation factor Tu (394 aa).

A tr-type G domain is found at 10-204; it reads KPHVNIGTIG…AVDSYIPQPV (195 aa). Residues 19–26 form a G1 region; that stretch reads GHVDHGKT. GTP is bound at residue 19–26; it reads GHVDHGKT. T26 lines the Mg(2+) pocket. Positions 60–64 are G2; that stretch reads GITIS. The segment at 81-84 is G3; that stretch reads DCPG. Residues 81–85 and 136–139 contribute to the GTP site; these read DCPGH and NKVD. A G4 region spans residues 136–139; that stretch reads NKVD. Residues 174 to 176 are G5; sequence SAL.

It belongs to the TRAFAC class translation factor GTPase superfamily. Classic translation factor GTPase family. EF-Tu/EF-1A subfamily. As to quaternary structure, monomer.

The protein resides in the cytoplasm. The catalysed reaction is GTP + H2O = GDP + phosphate + H(+). GTP hydrolase that promotes the GTP-dependent binding of aminoacyl-tRNA to the A-site of ribosomes during protein biosynthesis. In Rickettsia parkeri, this protein is Elongation factor Tu.